The sequence spans 155 residues: UPF0266 membrane protein lin0773 (155 aa).

3 helical membrane passes run 8–28 (IFLF…DAVI), 46–66 (RWDG…NTFF), and 70–90 (PFST…ICFF).

It belongs to the UPF0266 family.

The protein resides in the cell membrane. The chain is UPF0266 membrane protein lin0773 from Listeria innocua serovar 6a (strain ATCC BAA-680 / CLIP 11262).